Reading from the N-terminus, the 950-residue chain is Oxysterol-binding protein-related protein 1 (950 aa).

Residues 1-237 are interaction with RAB7A; sequence MNTEAEQQLL…NKVIYKALKR (237 aa). 3 ANK repeats span residues 47–76, 80–109, and 175–204; these read LGWT…EVNV, MGDT…DTTI, and LGNT…DPNL. Residues 235–334 enclose the PH domain; the sequence is LKRYEGPLWK…WLEAIEEHSA (100 aa). The stretch at 430-463 forms a coiled coil; that stretch reads NFKLEQEQEKNKILSEALETLATEHHELEQSLVK. The FFAT signature appears at 469–485; sequence SILSEDEFYDALSDSES. Position 499 is a phosphoserine (Ser499). A compositionally biased stretch (basic and acidic residues) spans 501–521; it reads EEEGEHLGSRKHRMSEEKDCG. Disordered stretches follow at residues 501 to 527, 795 to 816, and 881 to 913; these read EEEG…DALS, KKNT…LDEM, and MENG…SEED. A coiled-coil region spans residues 877–913; that stretch reads DIRAMENGEIDQASEEKKRLEEKQRAARKNRSKSEED. Positions 890-901 are enriched in basic and acidic residues; that stretch reads SEEKKRLEEKQR.

This sequence belongs to the OSBP family. In terms of assembly, interacts (via FFAT motif) with VAPA and VAPB. Interacts with the GTP-bound form of RAB7A. Interacts with OAS1B. Interacts (via FFAT motif) with MOSPD2 (via MSP domain).

Its subcellular location is the late endosome. Binds phospholipids; exhibits strong binding to phosphatidic acid and weak binding to phosphatidylinositol 3-phosphate. Stabilizes GTP-bound RAB7A on late endosomes/lysosomes and alters functional properties of late endocytic compartments via its interaction with RAB7A. Binds 25-hydroxycholesterol and cholesterol. The protein is Oxysterol-binding protein-related protein 1 of Homo sapiens (Human).